Consider the following 150-residue polypeptide: Protein Turandot X1/X2 (150 aa).

Residues 1 to 22 (MRLYIGSLLICVLLGIVPFATA) form the signal peptide. The tract at residues 127-150 (REEGQSNHANSPTTSPSRIQKMTK) is disordered. Over residues 132–150 (SNHANSPTTSPSRIQKMTK) the composition is skewed to polar residues.

The protein belongs to the Turandot family.

It localises to the secreted. Its function is as follows. A humoral factor that may play a role in stress tolerance. This is Protein Turandot X1/X2 from Drosophila sechellia (Fruit fly).